The following is a 136-amino-acid chain: Holo-[acyl-carrier-protein] synthase (136 aa).

2 residues coordinate Mg(2+): aspartate 8 and glutamate 57.

It belongs to the P-Pant transferase superfamily. AcpS family. Mg(2+) serves as cofactor.

The protein localises to the cytoplasm. It catalyses the reaction apo-[ACP] + CoA = holo-[ACP] + adenosine 3',5'-bisphosphate + H(+). Transfers the 4'-phosphopantetheine moiety from coenzyme A to a Ser of acyl-carrier-protein. This is Holo-[acyl-carrier-protein] synthase from Methylobacterium radiotolerans (strain ATCC 27329 / DSM 1819 / JCM 2831 / NBRC 15690 / NCIMB 10815 / 0-1).